Reading from the N-terminus, the 97-residue chain is Aspartyl/glutamyl-tRNA(Asn/Gln) amidotransferase subunit C (97 aa).

Belongs to the GatC family. In terms of assembly, heterotrimer of A, B and C subunits.

It carries out the reaction L-glutamyl-tRNA(Gln) + L-glutamine + ATP + H2O = L-glutaminyl-tRNA(Gln) + L-glutamate + ADP + phosphate + H(+). The enzyme catalyses L-aspartyl-tRNA(Asn) + L-glutamine + ATP + H2O = L-asparaginyl-tRNA(Asn) + L-glutamate + ADP + phosphate + 2 H(+). Functionally, allows the formation of correctly charged Asn-tRNA(Asn) or Gln-tRNA(Gln) through the transamidation of misacylated Asp-tRNA(Asn) or Glu-tRNA(Gln) in organisms which lack either or both of asparaginyl-tRNA or glutaminyl-tRNA synthetases. The reaction takes place in the presence of glutamine and ATP through an activated phospho-Asp-tRNA(Asn) or phospho-Glu-tRNA(Gln). The polypeptide is Aspartyl/glutamyl-tRNA(Asn/Gln) amidotransferase subunit C (Roseiflexus sp. (strain RS-1)).